Here is a 325-residue protein sequence, read N- to C-terminus: Tetraacyldisaccharide 4'-kinase (325 aa).

58–65 (TVGGSGKT) serves as a coordination point for ATP.

Belongs to the LpxK family.

It catalyses the reaction a lipid A disaccharide + ATP = a lipid IVA + ADP + H(+). It participates in glycolipid biosynthesis; lipid IV(A) biosynthesis; lipid IV(A) from (3R)-3-hydroxytetradecanoyl-[acyl-carrier-protein] and UDP-N-acetyl-alpha-D-glucosamine: step 6/6. Transfers the gamma-phosphate of ATP to the 4'-position of a tetraacyldisaccharide 1-phosphate intermediate (termed DS-1-P) to form tetraacyldisaccharide 1,4'-bis-phosphate (lipid IVA). In Coxiella burnetii (strain Dugway 5J108-111), this protein is Tetraacyldisaccharide 4'-kinase.